A 455-amino-acid chain; its full sequence is Chromosomal replication initiator protein DnaA (455 aa).

Positions 1 to 74 (MSEQEIWEKV…LYEAIGHEIA (74 aa)) are domain I, interacts with DnaA modulators. Residues 74–116 (APVFYTEEELKSLHTSEQKEENQPEQPAKKYTPGVDEAVIGGE) form a domain II region. The segment covering 85 to 95 (SLHTSEQKEEN) has biased composition (basic and acidic residues). A disordered region spans residues 85 to 104 (SLHTSEQKEENQPEQPAKKY). Positions 117 to 333 (QFNTHNTFET…GALTRVLAFS (217 aa)) are domain III, AAA+ region. ATP is bound by residues Gly161, Gly163, Lys164, and Thr165. The interval 334 to 455 (KLQGQPITTE…ENLEKEIRNQ (122 aa)) is domain IV, binds dsDNA.

Belongs to the DnaA family. In terms of assembly, oligomerizes as a right-handed, spiral filament on DNA at oriC.

It localises to the cytoplasm. Its function is as follows. Plays an essential role in the initiation and regulation of chromosomal replication. ATP-DnaA binds to the origin of replication (oriC) to initiate formation of the DNA replication initiation complex once per cell cycle. Binds the DnaA box (a 9 base pair repeat at the origin) and separates the double-stranded (ds)DNA. Forms a right-handed helical filament on oriC DNA; dsDNA binds to the exterior of the filament while single-stranded (ss)DNA is stabiized in the filament's interior. The ATP-DnaA-oriC complex binds and stabilizes one strand of the AT-rich DNA unwinding element (DUE), permitting loading of DNA polymerase. After initiation quickly degrades to an ADP-DnaA complex that is not apt for DNA replication. Binds acidic phospholipids. In Staphylococcus saprophyticus subsp. saprophyticus (strain ATCC 15305 / DSM 20229 / NCIMB 8711 / NCTC 7292 / S-41), this protein is Chromosomal replication initiator protein DnaA.